A 298-amino-acid polypeptide reads, in one-letter code: MSVQELSHPLIKDGWFREINNMWPGQAMTLKVKKVLYAGKSKYQDVLVFESETYGHVLVLDGAIQATERDEFSYQEMIAHLALNSHPNPKKVLVIGGGDGGVLREVVKHECVEEAILCDIDEDVIKVSKQYLPEMSAGFNHPKVKVHIGDGFKFLQDYQNTFDVIITDSSDPDGPAEALFQKPYFQLLSDALRGGGVITTQAECMWIHLGVISNVLTAVKTVFPNVRYAYTTIPTYPSGSIGFVVASKDASIDLSKPLRKWSPEEENKLCKYYNSEIHAASFVLPTFARDVVDKATSS.

A PABS domain is found at 13 to 248 (DGWFREINNM…GSIGFVVASK (236 aa)). An S-adenosyl 3-(methylsulfanyl)propylamine-binding site is contributed by Gln44. Tyr74 contributes to the putrescine binding site. S-adenosyl 3-(methylsulfanyl)propylamine contacts are provided by residues Gln75, Asp99, Asp119, 150–151 (DG), and Asp168. The active-site Proton acceptor is the Asp168. Putrescine is bound by residues 168–171 (DSSD) and Tyr236.

Belongs to the spermidine/spermine synthase family.

The catalysed reaction is S-adenosyl 3-(methylsulfanyl)propylamine + putrescine = S-methyl-5'-thioadenosine + spermidine + H(+). It participates in amine and polyamine biosynthesis; spermidine biosynthesis; spermidine from putrescine: step 1/1. This is Spermidine synthase from Schizosaccharomyces pombe (strain 972 / ATCC 24843) (Fission yeast).